The following is an 87-amino-acid chain: Antitoxin YefM (87 aa).

Belongs to the phD/YefM antitoxin family. As to quaternary structure, forms a complex with YoeB which inhibits its toxin activity.

Functionally, antitoxin component of a type II toxin-antitoxin (TA) system. A probable antitoxin for the putative mRNA interferase YeoB. This is Antitoxin YefM from Streptomyces coelicolor (strain ATCC BAA-471 / A3(2) / M145).